The primary structure comprises 213 residues: uncharacterized protein (213 aa).

This is an uncharacterized protein from Acanthamoeba polyphaga (Amoeba).